We begin with the raw amino-acid sequence, 93 residues long: Alpha-defensin 22 (93 aa).

The signal sequence occupies residues 1–19 (MKKLVLLSALVLLAYQVQT). The propeptide occupies 20 to 58 (DPIQNTDEETNTEEQPGEEDQAVSVSFGGQEGSALHEKL). Positions 22–41 (IQNTDEETNTEEQPGEEDQA) are disordered. Acidic residues predominate over residues 25 to 40 (TDEETNTEEQPGEEDQ). 3 disulfides stabilise this stretch: Cys64-Cys89, Cys66-Cys81, and Cys71-Cys88.

The protein belongs to the alpha-defensin family.

The protein localises to the secreted. In terms of biological role, may have microbicidal activities. This Mus musculus (Mouse) protein is Alpha-defensin 22 (Defa22).